The chain runs to 95 residues: MEVVLLFLCGLLAPAVLASATEQEKEKDPFHYDYQTLRIGGLVFAVVLFSVGILLILSRRCKCSFNQKPRAPGDEEAQVENLVTANATEPQKAEN.

The N-terminal stretch at 1-18 (MEVVLLFLCGLLAPAVLA) is a signal peptide. Residues 19–35 (SATEQEKEKDPFHYDYQ) lie on the Extracellular side of the membrane. A helical membrane pass occupies residues 36–58 (TLRIGGLVFAVVLFSVGILLILS). Over 59 to 95 (RRCKCSFNQKPRAPGDEEAQVENLVTANATEPQKAEN) the chain is Cytoplasmic. The disordered stretch occupies residues 69–95 (PRAPGDEEAQVENLVTANATEPQKAEN).

Belongs to the FXYD family. In terms of assembly, regulatory subunit of the sodium/potassium-transporting ATPase which is composed of a catalytic alpha subunit, a non-catalytic beta subunit and an additional regulatory subunit. The regulatory subunit, a member of the FXYD protein family, modulates the enzymatic activity in a tissue- and isoform-specific way by changing affinities of the Na+/K+-ATPase toward Na(+), K(+) or ATP.

It is found in the cell membrane. Functionally, associates with and regulates the activity of the sodium/potassium-transporting ATPase (NKA) which catalyzes the hydrolysis of ATP coupled with the exchange of Na(+) and K(+) ions across the plasma membrane. Reduces the apparent affinity for intracellular Na(+) with no change in the apparent affinity for extracellular K(+). In addition to modulating NKA kinetics, may also function as a regulator of NKA localization to the plasma membrane. In Bos taurus (Bovine), this protein is FXYD domain-containing ion transport regulator 6 (FXYD6).